A 161-amino-acid polypeptide reads, in one-letter code: Thy-1 membrane glycoprotein (161 aa).

A signal peptide spans 1 to 19 (MNLAISIALLLTVLQVSRG). Gln20 carries the pyrrolidone carboxylic acid modification. The 107-residue stretch at 20–126 (QKVTSLTACL…SQNVTVLRDK (107 aa)) folds into the Ig-like V-type domain. 2 cysteine pairs are disulfide-bonded: Cys28–Cys130 and Cys38–Cys104. Asn42 and Asn79 each carry an N-linked (GlcNAc...) asparagine glycan. Phosphoserine is present on Ser82. An N-linked (GlcNAc...) asparagine glycan is attached at Asn119. Residue Cys130 is the site of GPI-anchor amidated cysteine; alternate attachment. The propeptide at 131 to 161 (EGISLLAQNTSWLXLLLLSLSLLQATDFMSL) is removed in mature form. Asn139 is a glycosylation site (N-linked (GlcNAc...) asparagine).

The protein localises to the cell membrane. Its function is as follows. May play a role in cell-cell or cell-ligand interactions during synaptogenesis and other events in the brain. The protein is Thy-1 membrane glycoprotein (THY1) of Macaca mulatta (Rhesus macaque).